We begin with the raw amino-acid sequence, 154 residues long: Troponin C, isoform 1 (154 aa).

EF-hand domains follow at residues 8 to 43 (EQTA…LGHQ), 44 to 79 (LDDA…FLVE), 84 to 119 (AMMA…LDDK), and 120 to 154 (LTND…GGDD). 5 residues coordinate Ca(2+): aspartate 57, aspartate 59, serine 61, glutamine 63, and glutamate 68. 5 residues coordinate Ca(2+): aspartate 133, aspartate 135, serine 137, threonine 139, and glutamate 144.

It belongs to the troponin C family. Present only in adult muscles.

The polypeptide is Troponin C, isoform 1 (TpnC41C) (Drosophila melanogaster (Fruit fly)).